A 153-amino-acid chain; its full sequence is MFTIDFTDHTGEVNSEWYQQIDNLLTFAKKEEKIEDDAELSVTFVNKQEIQEINRDYRNKDKVTDVISFALEEDEPDIEGLDMPRVLGDIIICADVAKEQAEEYGHSFERELGFLALHGFLHLLGYDHMNEADEKEMFGRQKLILDNYGLTRD.

3 residues coordinate Zn(2+): His118, His122, and His128.

It belongs to the endoribonuclease YbeY family. Zn(2+) serves as cofactor.

It localises to the cytoplasm. Functionally, single strand-specific metallo-endoribonuclease involved in late-stage 70S ribosome quality control and in maturation of the 3' terminus of the 16S rRNA. The chain is Endoribonuclease YbeY from Staphylococcus carnosus (strain TM300).